A 312-amino-acid polypeptide reads, in one-letter code: Ribosomal RNA small subunit methyltransferase H (312 aa).

S-adenosyl-L-methionine contacts are provided by residues 35 to 37 (GGH), Asp-55, Phe-79, Asp-101, and Gln-108.

This sequence belongs to the methyltransferase superfamily. RsmH family.

The protein localises to the cytoplasm. The enzyme catalyses cytidine(1402) in 16S rRNA + S-adenosyl-L-methionine = N(4)-methylcytidine(1402) in 16S rRNA + S-adenosyl-L-homocysteine + H(+). Functionally, specifically methylates the N4 position of cytidine in position 1402 (C1402) of 16S rRNA. This chain is Ribosomal RNA small subunit methyltransferase H, found in Buchnera aphidicola subsp. Schizaphis graminum (strain Sg).